A 555-amino-acid chain; its full sequence is CTP synthase (555 aa).

The tract at residues 1–267 (MTKFVFVTGG…AQQVLKFMHL (267 aa)) is amidoligase domain. Ser13 serves as a coordination point for CTP. A UTP-binding site is contributed by Ser13. ATP is bound by residues 14 to 19 (SIGKGI) and Asp71. Residues Asp71 and Glu141 each coordinate Mg(2+). CTP is bound by residues 148–150 (DIE), 188–193 (KTKPTQ), and Lys224. Residues 188 to 193 (KTKPTQ) and Lys224 contribute to the UTP site. Ala242 is a binding site for ATP. Residues 299-535 (YVQLSDAYLS…VGACLADNGN (237 aa)) enclose the Glutamine amidotransferase type-1 domain. L-glutamine is bound at residue Gly354. The Nucleophile; for glutamine hydrolysis role is filled by Cys381. Residues 382-385 (LGMQ), Glu405, and Arg463 each bind L-glutamine. Active-site residues include His508 and Glu510. The interval 536-555 (NANHHDSTPAEPLVSEPLSS) is disordered.

It belongs to the CTP synthase family. In terms of assembly, homotetramer.

It carries out the reaction UTP + L-glutamine + ATP + H2O = CTP + L-glutamate + ADP + phosphate + 2 H(+). The enzyme catalyses L-glutamine + H2O = L-glutamate + NH4(+). The catalysed reaction is UTP + NH4(+) + ATP = CTP + ADP + phosphate + 2 H(+). It participates in pyrimidine metabolism; CTP biosynthesis via de novo pathway; CTP from UDP: step 2/2. With respect to regulation, allosterically activated by GTP, when glutamine is the substrate; GTP has no effect on the reaction when ammonia is the substrate. The allosteric effector GTP functions by stabilizing the protein conformation that binds the tetrahedral intermediate(s) formed during glutamine hydrolysis. Inhibited by the product CTP, via allosteric rather than competitive inhibition. Functionally, catalyzes the ATP-dependent amination of UTP to CTP with either L-glutamine or ammonia as the source of nitrogen. Regulates intracellular CTP levels through interactions with the four ribonucleotide triphosphates. The polypeptide is CTP synthase (Acaryochloris marina (strain MBIC 11017)).